The chain runs to 157 residues: UPF0262 protein Atu0536 (157 aa).

The protein belongs to the UPF0262 family.

This chain is UPF0262 protein Atu0536, found in Agrobacterium fabrum (strain C58 / ATCC 33970) (Agrobacterium tumefaciens (strain C58)).